The sequence spans 147 residues: Endoribonuclease YbeY (147 aa).

Zn(2+) contacts are provided by His107, His111, and His117.

The protein belongs to the endoribonuclease YbeY family. The cofactor is Zn(2+).

It is found in the cytoplasm. Single strand-specific metallo-endoribonuclease involved in late-stage 70S ribosome quality control and in maturation of the 3' terminus of the 16S rRNA. The chain is Endoribonuclease YbeY from Solibacter usitatus (strain Ellin6076).